A 597-amino-acid polypeptide reads, in one-letter code: Elongation factor 4 (597 aa).

A tr-type G domain is found at 2-184; it reads KNIRNFSIIA…EIVAKIPAPA (183 aa). GTP-binding positions include 14 to 19 and 131 to 134; these read DHGKST and NKID.

It belongs to the TRAFAC class translation factor GTPase superfamily. Classic translation factor GTPase family. LepA subfamily.

Its subcellular location is the cell inner membrane. The enzyme catalyses GTP + H2O = GDP + phosphate + H(+). Required for accurate and efficient protein synthesis under certain stress conditions. May act as a fidelity factor of the translation reaction, by catalyzing a one-codon backward translocation of tRNAs on improperly translocated ribosomes. Back-translocation proceeds from a post-translocation (POST) complex to a pre-translocation (PRE) complex, thus giving elongation factor G a second chance to translocate the tRNAs correctly. Binds to ribosomes in a GTP-dependent manner. The polypeptide is Elongation factor 4 (Neisseria meningitidis serogroup A / serotype 4A (strain DSM 15465 / Z2491)).